Here is a 329-residue protein sequence, read N- to C-terminus: Tagatose 1,6-diphosphate aldolase 2 (329 aa).

This sequence belongs to the aldolase LacD family.

The catalysed reaction is D-tagatofuranose 1,6-bisphosphate = D-glyceraldehyde 3-phosphate + dihydroxyacetone phosphate. The protein operates within carbohydrate metabolism; D-tagatose 6-phosphate degradation; D-glyceraldehyde 3-phosphate and glycerone phosphate from D-tagatose 6-phosphate: step 2/2. In Streptococcus mutans serotype c (strain ATCC 700610 / UA159), this protein is Tagatose 1,6-diphosphate aldolase 2 (lacD2).